A 231-amino-acid chain; its full sequence is Orotidine 5'-phosphate decarboxylase (231 aa).

Substrate is bound by residues Asp-11, Lys-33, 60-69 (DLKFHDIPNT), Thr-120, Arg-181, Gln-190, Gly-210, and Arg-211. Lys-62 functions as the Proton donor in the catalytic mechanism.

The protein belongs to the OMP decarboxylase family. Type 1 subfamily. In terms of assembly, homodimer.

The enzyme catalyses orotidine 5'-phosphate + H(+) = UMP + CO2. It participates in pyrimidine metabolism; UMP biosynthesis via de novo pathway; UMP from orotate: step 2/2. Functionally, catalyzes the decarboxylation of orotidine 5'-monophosphate (OMP) to uridine 5'-monophosphate (UMP). The sequence is that of Orotidine 5'-phosphate decarboxylase from Shewanella oneidensis (strain ATCC 700550 / JCM 31522 / CIP 106686 / LMG 19005 / NCIMB 14063 / MR-1).